Here is a 329-residue protein sequence, read N- to C-terminus: Phenylalanine--tRNA ligase alpha subunit (329 aa).

Residue E254 coordinates Mg(2+).

This sequence belongs to the class-II aminoacyl-tRNA synthetase family. Phe-tRNA synthetase alpha subunit type 1 subfamily. In terms of assembly, tetramer of two alpha and two beta subunits. Requires Mg(2+) as cofactor.

Its subcellular location is the cytoplasm. It catalyses the reaction tRNA(Phe) + L-phenylalanine + ATP = L-phenylalanyl-tRNA(Phe) + AMP + diphosphate + H(+). The chain is Phenylalanine--tRNA ligase alpha subunit from Haemophilus influenzae (strain 86-028NP).